A 1288-amino-acid chain; its full sequence is VWFA and cache domain-containing protein 1 (1288 aa).

The signal sequence occupies residues 1–49 (MAREPEEEETVRPAAVVRRCPRCPGWPGAPRPPLWLLCLVACWILGAVA). The Extracellular portion of the chain corresponds to 50–1109 (DADFSILDEA…ITLNMIKSAP (1060 aa)). A glycan (N-linked (GlcNAc...) asparagine) is linked at asparagine 159. Residues 242-457 (HIVVILDHGA…TTVGRFYTNL (216 aa)) form the VWFA domain. 2 Cache domains span residues 467–546 (FSLP…SEPP) and 786–867 (LTGP…HPTL). Residues 1110-1130 (VGPVAGGIMGCIMVLVLAVYA) traverse the membrane as a helical segment. Residues 1131–1288 (YRHQIHRRSH…VTVHTVDAEC (158 aa)) are Cytoplasmic-facing. Disordered stretches follow at residues 1157–1176 (NLEN…RGII) and 1187–1237 (ERHV…VDVG). Basic and acidic residues predominate over residues 1159–1174 (ENDRDERDDDSHEDRG). Residues 1210–1229 (GYSTMSPQEDSENPPCNNDP) are compositionally biased toward polar residues.

Belongs to the calcium channel subunit alpha-2/delta family.

It localises to the membrane. Functionally, may regulate voltage-dependent calcium channels. In Mus musculus (Mouse), this protein is VWFA and cache domain-containing protein 1 (Cachd1).